The primary structure comprises 79 residues: uncharacterized protein (79 aa).

The segment at 20-52 (TERGAGLSPAAPPDPSPAIAPTMAEGGVPSPGP) is disordered.

This is an uncharacterized protein from Homo sapiens (Human).